Here is a 185-residue protein sequence, read N- to C-terminus: Tetratricopeptide repeat protein 36 homolog (185 aa).

TPR repeat units follow at residues 53 to 86, 88 to 119, and 125 to 158; these read SREL…AQRA, VLNN…ASDQ, and CHAH…GSKF.

It belongs to the TTC36 family.

This chain is Tetratricopeptide repeat protein 36 homolog, found in Drosophila pseudoobscura pseudoobscura (Fruit fly).